Here is a 977-residue protein sequence, read N- to C-terminus: uncharacterized protein (977 aa).

The segment at 100–152 (ATSPLQQNGKSRDTEKPPSMKEKDLSSNSSSQHDKAFHERVDQGKNKSSTTKY) is disordered. Composition is skewed to basic and acidic residues over residues 109-124 (KSRDTEKPPSMKEKDL) and 131-144 (QHDKAFHERVDQGK). Position 165 is a phosphoserine (S165). Polar residues-rich tracts occupy residues 166-175 (PGQSVNSLKP) and 183-193 (STKSSTSSEMH). Residues 166–194 (PGQSVNSLKPNSGDEVPSTKSSTSSEMHT) are disordered.

This is an uncharacterized protein from Schizosaccharomyces pombe (strain 972 / ATCC 24843) (Fission yeast).